The sequence spans 347 residues: GTP 3',8-cyclase (347 aa).

A Radical SAM core domain is found at 10-242 (RLNRPIGVLR…ERINARWPLE (233 aa)). Position 19 (arginine 19) interacts with GTP. 2 residues coordinate [4Fe-4S] cluster: cysteine 26 and cysteine 30. Tyrosine 32 contacts S-adenosyl-L-methionine. [4Fe-4S] cluster is bound at residue cysteine 33. Residue arginine 65 coordinates GTP. Glycine 69 lines the S-adenosyl-L-methionine pocket. Threonine 104 contacts GTP. Serine 129 is a binding site for S-adenosyl-L-methionine. Lysine 178 contacts GTP. Residue methionine 212 coordinates S-adenosyl-L-methionine. Positions 275 and 278 each coordinate [4Fe-4S] cluster. 280–282 (RLR) contacts GTP. A [4Fe-4S] cluster-binding site is contributed by cysteine 292.

It belongs to the radical SAM superfamily. MoaA family. As to quaternary structure, monomer and homodimer. The cofactor is [4Fe-4S] cluster.

The catalysed reaction is GTP + AH2 + S-adenosyl-L-methionine = (8S)-3',8-cyclo-7,8-dihydroguanosine 5'-triphosphate + 5'-deoxyadenosine + L-methionine + A + H(+). It participates in cofactor biosynthesis; molybdopterin biosynthesis. Functionally, catalyzes the cyclization of GTP to (8S)-3',8-cyclo-7,8-dihydroguanosine 5'-triphosphate. The sequence is that of GTP 3',8-cyclase from Synechococcus sp. (strain CC9605).